Consider the following 483-residue polypeptide: MRDGEQTPGVALTREKKLLIARALDEMRINVIEAGSAITSAGERESIKAVANAGLDAEICSYCRIVKMDVDHALECDVDSIHLVAPVSDLHIKTKIKKDRDTVRQIAAEVTEYAKDHGLIVELSGEDASRADPEFLKAIYSDGIDAGADRLCFCDTVGLLVPEKTTEIFRDLSSSLKAPISIHCHNDFGLATANTVAALAAGAKQSHVTINGLGERAGNASLEEVVMSLEWLYKYDTGIKHEQIYRTSRLVSRLTGIPVSPNKALVGGNAFTHEAGIHVHGLLADKSTYEPMSPEYIGRQRQIVLGKHAGRSSITLALKEMGLEADEAQTEEIFNRVKQMGDQGKHITDADLQTIAETVLDIYKEPIVKLEEFTIVSGNRVTPTASIKLNVKDKEIVQAGIGNGPVDAVINAIRRAVSSCAEDVVLEEYHVDSITGGTDALVEVRVKLSKNGKVITASGARTDIIMASVEAVMNGMNRLIREE.

The region spanning 1 to 245 (MRDGEQTPGV…DTGIKHEQIY (245 aa)) is the Pyruvate carboxyltransferase domain.

Belongs to the alpha-IPM synthase/homocitrate synthase family. Homodimer.

It carries out the reaction pyruvate + acetyl-CoA + H2O = (3R)-citramalate + CoA + H(+). It participates in amino-acid biosynthesis; L-isoleucine biosynthesis; 2-oxobutanoate from pyruvate: step 1/3. Functionally, catalyzes the condensation of pyruvate and acetyl-coenzyme A to form (R)-citramalate. The sequence is that of Putative (R)-citramalate synthase CimA from Methanosarcina acetivorans (strain ATCC 35395 / DSM 2834 / JCM 12185 / C2A).